Here is a 191-residue protein sequence, read N- to C-terminus: Cell division protein SepF (191 aa).

Positions 21–96 (EVEEPAVASV…NQQPAQEKTT (76 aa)) are disordered. Low complexity predominate over residues 25–56 (PAVASVKRQQDAAQPASQQQKAQSHQYHQSAS). Composition is skewed to polar residues over residues 57 to 69 (RPSQ…GQNR) and 86 to 95 (HNQQPAQEKT).

The protein belongs to the SepF family. Homodimer. Interacts with FtsZ.

It localises to the cytoplasm. In terms of biological role, cell division protein that is part of the divisome complex and is recruited early to the Z-ring. Probably stimulates Z-ring formation, perhaps through the cross-linking of FtsZ protofilaments. Its function overlaps with FtsA. This chain is Cell division protein SepF, found in Streptococcus mutans serotype c (strain ATCC 700610 / UA159).